The primary structure comprises 189 residues: Probable chorismate pyruvate-lyase (189 aa).

Substrate-binding residues include R77, L115, and E174.

Belongs to the UbiC family.

The protein localises to the cytoplasm. The catalysed reaction is chorismate = 4-hydroxybenzoate + pyruvate. It functions in the pathway cofactor biosynthesis; ubiquinone biosynthesis. Its function is as follows. Removes the pyruvyl group from chorismate, with concomitant aromatization of the ring, to provide 4-hydroxybenzoate (4HB) for the ubiquinone pathway. The polypeptide is Probable chorismate pyruvate-lyase (Shewanella sp. (strain MR-7)).